We begin with the raw amino-acid sequence, 263 residues long: PDZ domain-containing protein 9 (263 aa).

The PDZ domain occupies 30–109 (QTKLTVGSMG…GTILQIKVYR (80 aa)).

The chain is PDZ domain-containing protein 9 (PDZD9) from Bos taurus (Bovine).